The primary structure comprises 234 residues: 2,3-bisphosphoglycerate-dependent phosphoglycerate mutase (234 aa).

Residues 8–15, 21–22, arginine 60, 87–90, lysine 98, 114–115, and 183–184 each bind substrate; these read RHGESVWN, TG, ERHY, RR, and GN. Residue histidine 9 is the Tele-phosphohistidine intermediate of the active site. Catalysis depends on glutamate 87, which acts as the Proton donor/acceptor.

This sequence belongs to the phosphoglycerate mutase family. BPG-dependent PGAM subfamily. Homodimer.

The catalysed reaction is (2R)-2-phosphoglycerate = (2R)-3-phosphoglycerate. It participates in carbohydrate degradation; glycolysis; pyruvate from D-glyceraldehyde 3-phosphate: step 3/5. Its function is as follows. Catalyzes the interconversion of 2-phosphoglycerate and 3-phosphoglycerate. This chain is 2,3-bisphosphoglycerate-dependent phosphoglycerate mutase, found in Geobacter sp. (strain M21).